We begin with the raw amino-acid sequence, 725 residues long: Fatty acid oxidation complex subunit alpha (725 aa).

Positions 1–189 are enoyl-CoA hydratase/isomerase; sequence MIYQGENLSV…ALGMIDGVVS (189 aa). Asp-296 is a binding site for substrate. The tract at residues 311–725 is 3-hydroxyacyl-CoA dehydrogenase; that stretch reads EPVTSAAVLG…APQSLSAPSA (415 aa). NAD(+) is bound by residues Met-324, Asp-343, 400 to 402, Lys-407, and Ser-429; that span reads VVE. His-450 acts as the For 3-hydroxyacyl-CoA dehydrogenase activity in catalysis. Position 453 (Asn-453) interacts with NAD(+). Substrate contacts are provided by Asn-500 and Tyr-660.

The protein in the N-terminal section; belongs to the enoyl-CoA hydratase/isomerase family. This sequence in the C-terminal section; belongs to the 3-hydroxyacyl-CoA dehydrogenase family. As to quaternary structure, heterotetramer of two alpha chains (FadB) and two beta chains (FadA).

The enzyme catalyses a (3S)-3-hydroxyacyl-CoA + NAD(+) = a 3-oxoacyl-CoA + NADH + H(+). It catalyses the reaction a (3S)-3-hydroxyacyl-CoA = a (2E)-enoyl-CoA + H2O. The catalysed reaction is a 4-saturated-(3S)-3-hydroxyacyl-CoA = a (3E)-enoyl-CoA + H2O. It carries out the reaction (3S)-3-hydroxybutanoyl-CoA = (3R)-3-hydroxybutanoyl-CoA. The enzyme catalyses a (3Z)-enoyl-CoA = a 4-saturated (2E)-enoyl-CoA. It catalyses the reaction a (3E)-enoyl-CoA = a 4-saturated (2E)-enoyl-CoA. It functions in the pathway lipid metabolism; fatty acid beta-oxidation. Functionally, involved in the aerobic and anaerobic degradation of long-chain fatty acids via beta-oxidation cycle. Catalyzes the formation of 3-oxoacyl-CoA from enoyl-CoA via L-3-hydroxyacyl-CoA. It can also use D-3-hydroxyacyl-CoA and cis-3-enoyl-CoA as substrate. The chain is Fatty acid oxidation complex subunit alpha from Aliivibrio fischeri (strain MJ11) (Vibrio fischeri).